The sequence spans 1514 residues: Neuropathy target esterase sws (1514 aa).

Over 1–34 the chain is Lumenal; that stretch reads MDVLELLRASATGSYTALFSDAWCQYVSKQITNS. A helical membrane pass occupies residues 35 to 55; it reads MYLYCALGVLSMVFLAWFMYF. Residues 56 to 1514 lie on the Cytoplasmic side of the membrane; sequence KRLARIRLRD…KGGAYNETKN (1459 aa). An a nucleoside 3',5'-cyclic phosphate-binding site is contributed by 175-302; it reads IFGHFEKPVF…IRVIQVIMIR (128 aa). The span at 337-352 shows a compositional bias: polar residues; that stretch reads STHSSQCSRQTGSQPT. The tract at residues 337–418 is disordered; that stretch reads STHSSQCSRQ…NPNPDVINTS (82 aa). The span at 356–374 shows a compositional bias: low complexity; it reads PAPTCSNTTTTASPTTANT. Residue Ser-457 is modified to Phosphoserine. A nucleoside 3',5'-cyclic phosphate contacts are provided by residues 515–644 and 633–760; these read ELGL…VVRR and IVLD…LSHR. The PNPLA domain occupies 987–1153; that stretch reads LVLGGGGARG…VNNLPGQLWR (167 aa). The short motif at 991-996 is the GXGXXG element; the sequence is GGGARG. Residues 1018-1022 carry the GXSXG motif; it reads GVSIG. Ser-1020 (nucleophile) is an active-site residue. Asp-1140 serves as the catalytic Proton acceptor. The DGA/G motif lies at 1140–1142; sequence DGG. Ser-1234 carries the post-translational modification Phosphoserine. Residues 1409–1514 form a disordered region; the sequence is EKSIHSAATS…KGGAYNETKN (106 aa). 2 stretches are compositionally biased toward basic and acidic residues: residues 1425 to 1449 and 1456 to 1470; these read RSREFHKLEQDRSVEITRLKDETER and LDRKGDGQEQEKEPE. Positions 1471-1489 are enriched in acidic residues; that stretch reads QEQELETEEPNQENTEVEE.

Belongs to the NTE family. In terms of assembly, interacts with Pka-C3; interaction inhibits the catalytic function of Pka-C3 and the esterase activity of sws.

It localises to the endoplasmic reticulum membrane. The catalysed reaction is a 1-acyl-sn-glycero-3-phosphocholine + H2O = sn-glycerol 3-phosphocholine + a fatty acid + H(+). Phospholipase B that deacylates intracellular phosphatidylcholine (PtdCho), generating glycerophosphocholine (GroPtdCho). This deacylation occurs at both sn-2 and sn-1 positions of PtdCho. Its specific chemical modification by certain organophosphorus (OP) compounds leads to distal axonopathy. Plays a role in the signaling mechanism between neurons and glia that regulates glia wrapping during development of the adult brain. Essential for membrane lipid homeostasis and cell survival in both neurons and glia of the adult brain. In Drosophila ananassae (Fruit fly), this protein is Neuropathy target esterase sws.